The following is a 183-amino-acid chain: Large ribosomal subunit protein bL27m (183 aa).

The N-terminal 34 residues, 1-34 (MFLRPTSIPSAVSQIRAQLFAGPSSLASQIQVRW), are a transit peptide targeting the mitochondrion.

This sequence belongs to the bacterial ribosomal protein bL27 family.

It localises to the mitochondrion. The chain is Large ribosomal subunit protein bL27m (RPL27) from Cryptococcus neoformans var. neoformans serotype D (strain B-3501A) (Filobasidiella neoformans).